The following is a 331-amino-acid chain: Ribosomal RNA small subunit methyltransferase H (331 aa).

S-adenosyl-L-methionine-binding positions include 48–50, Asp67, Asp115, and Gln122; that span reads GGH. Positions 297–331 are disordered; that stretch reads RGTEKPTEEEISENRRASSAKVRAVEKIRTSRTTA. Positions 298–312 are enriched in basic and acidic residues; that stretch reads GTEKPTEEEISENRR.

It belongs to the methyltransferase superfamily. RsmH family.

It is found in the cytoplasm. The enzyme catalyses cytidine(1402) in 16S rRNA + S-adenosyl-L-methionine = N(4)-methylcytidine(1402) in 16S rRNA + S-adenosyl-L-homocysteine + H(+). Specifically methylates the N4 position of cytidine in position 1402 (C1402) of 16S rRNA. In Micrococcus luteus (strain ATCC 4698 / DSM 20030 / JCM 1464 / CCM 169 / CCUG 5858 / IAM 1056 / NBRC 3333 / NCIMB 9278 / NCTC 2665 / VKM Ac-2230) (Micrococcus lysodeikticus), this protein is Ribosomal RNA small subunit methyltransferase H.